Reading from the N-terminus, the 63-residue chain is Kappa-theraphotoxin-Gr3a (63 aa).

The first 21 residues, 1–21, serve as a signal peptide directing secretion; that stretch reads MKTSVFVLVLGLVLLFAVSFA. Residues 22 to 29 constitute a propeptide that is removed on maturation; the sequence is TEMEESAR. Intrachain disulfides connect C31–C45, C38–C50, and C44–C57.

It belongs to the neurotoxin 10 (Hwtx-1) family. 63 (VsTx1) subfamily. In terms of tissue distribution, expressed by the venom gland.

The protein resides in the secreted. Functionally, inhibits sodium channels Nav1.7/SCN9A and potassium channels Kv11.1/KCNH2. Also binds the voltage-sensor domain of the potassium channel KvAP (from the archaeon Aeropyrum pernix) with very slow apparent binding kinetics and affects channel gating. Reaches its target by dynamically partitioning into anionic or zwitterionic headgroup lipid membranes. May bind to the open state of KvAP. This Grammostola rosea (Chilean rose tarantula) protein is Kappa-theraphotoxin-Gr3a.